The chain runs to 469 residues: Septin homolog spn1 (469 aa).

Residues 1–58 (MASMVLADGMPTVKDDSTRSRGSDVDSFTSTDNVTQINVEAAISENKNEEKPIQDNSE) are disordered. The segment covering 13–24 (VKDDSTRSRGSD) has biased composition (basic and acidic residues). Over residues 26–38 (DSFTSTDNVTQIN) the composition is skewed to polar residues. The Septin-type G domain occupies 92–367 (QGFNFNVLVL…EAYRTERLLS (276 aa)). The segment at 102–109 (GESGSGKS) is G1 motif. GTP-binding positions include 102-109 (GESGSGKS), Thr-139, Gly-165, 244-252 (KADTLTDDE), and Arg-317. The tract at residues 162 to 165 (DTPG) is G3 motif. The tract at residues 243-246 (AKAD) is G4 motif. Residues 383 to 469 (SAKLEEERAL…NEKSKRKFFK (87 aa)) are a coiled coil.

Belongs to the TRAFAC class TrmE-Era-EngA-EngB-Septin-like GTPase superfamily. Septin GTPase family. In terms of assembly, component of the septin complex composed of two copies of each spn1, spn2, spn3 and spn4.

The protein resides in the cytoplasm. It localises to the cell cortex. Its function is as follows. Plays a role in the cell cycle. Involved in a late stage of septum formation leading to the separation of the daughter cells. The sequence is that of Septin homolog spn1 (spn1) from Schizosaccharomyces pombe (strain 972 / ATCC 24843) (Fission yeast).